The following is a 196-amino-acid chain: Serine recombinase PinR (196 aa).

One can recognise a Resolvase/invertase-type recombinase catalytic domain in the interval 3 to 143 (RIFAYCRIST…SGIVRARGAG (141 aa)). The active-site O-(5'-phospho-DNA)-serine intermediate is the Ser11.

The protein belongs to the site-specific recombinase resolvase family.

This Escherichia coli (strain K12) protein is Serine recombinase PinR (pinR).